An 80-amino-acid chain; its full sequence is Protein pegasus (80 aa).

An N-terminal signal peptide occupies residues 1 to 22; the sequence is MKLSAVLLAIALLALSLVQCLG. Residues 24-80 enclose the Kazal-like domain; that stretch reads PDPSTKCVMECDTQEYRSICAADDKGSTKTYRNLCVMKTENCLQNANFQKISDKECP. Disulfide bonds link cysteine 30–cysteine 65, cysteine 34–cysteine 58, and cysteine 43–cysteine 79.

As to quaternary structure, interacts with wg; the interaction facilitates short-range diffusion of wg. In terms of tissue distribution, strongly expressed in the developing fly wing but is excluded from the presumptive wing margin.

Its subcellular location is the secreted. In terms of biological role, increases short-range diffusion of the wingless/wg protein, enhancing its signaling and expression of target genes required for wing margin morphogenesis. May act as a serine protease inhibitor since it possess the Kazal serine protease inhibitor signature. This chain is Protein pegasus, found in Drosophila melanogaster (Fruit fly).